The primary structure comprises 171 residues: UPF0398 protein SEQ_1788 (171 aa).

It belongs to the UPF0398 family.

The sequence is that of UPF0398 protein SEQ_1788 from Streptococcus equi subsp. equi (strain 4047).